The sequence spans 123 residues: MEKLRVFELREKSDAELLKLLDDLKQELATFRVSKVTATGTSKLSKITLVRKAVAKVLTVYNQRKKEEARKKYKKLSKTPLNLRPKLTRAKRKALTTKQLTMKTIKERKRAENLPKRKYALLV.

Belongs to the universal ribosomal protein uL29 family.

This is Large ribosomal subunit protein uL29 (RPL35) from Theileria parva (East coast fever infection agent).